An 85-amino-acid chain; its full sequence is Large ribosomal subunit protein bL27 (85 aa).

A compositionally biased stretch (gly residues) spans methionine 1–threonine 10. The interval methionine 1–methionine 20 is disordered.

This sequence belongs to the bacterial ribosomal protein bL27 family.

The polypeptide is Large ribosomal subunit protein bL27 (Methylibium petroleiphilum (strain ATCC BAA-1232 / LMG 22953 / PM1)).